A 303-amino-acid polypeptide reads, in one-letter code: Acetylglutamate kinase (303 aa).

Substrate is bound by residues 76–77 (GG), arginine 98, and asparagine 199.

It belongs to the acetylglutamate kinase family. ArgB subfamily.

The protein resides in the cytoplasm. The catalysed reaction is N-acetyl-L-glutamate + ATP = N-acetyl-L-glutamyl 5-phosphate + ADP. Its pathway is amino-acid biosynthesis; L-arginine biosynthesis; N(2)-acetyl-L-ornithine from L-glutamate: step 2/4. Functionally, catalyzes the ATP-dependent phosphorylation of N-acetyl-L-glutamate. The polypeptide is Acetylglutamate kinase (Clavibacter sepedonicus (Clavibacter michiganensis subsp. sepedonicus)).